Consider the following 359-residue polypeptide: tRNA-specific 2-thiouridylase MnmA (359 aa).

ATP contacts are provided by residues glycine 9–serine 16 and methionine 35. Residues asparagine 95–aspartate 97 are interaction with target base in tRNA. The Nucleophile role is filled by cysteine 100. Cysteines 100 and 197 form a disulfide. Glycine 124 contributes to the ATP binding site. The interaction with tRNA stretch occupies residues lysine 147–glutamine 149. The Cysteine persulfide intermediate role is filled by cysteine 197. The segment at arginine 309–tyrosine 310 is interaction with tRNA.

It belongs to the MnmA/TRMU family.

The protein resides in the cytoplasm. It carries out the reaction S-sulfanyl-L-cysteinyl-[protein] + uridine(34) in tRNA + AH2 + ATP = 2-thiouridine(34) in tRNA + L-cysteinyl-[protein] + A + AMP + diphosphate + H(+). Functionally, catalyzes the 2-thiolation of uridine at the wobble position (U34) of tRNA, leading to the formation of s(2)U34. In Francisella philomiragia subsp. philomiragia (strain ATCC 25017 / CCUG 19701 / FSC 153 / O#319-036), this protein is tRNA-specific 2-thiouridylase MnmA.